Consider the following 495-residue polypeptide: Glutamyl-tRNA(Gln) amidotransferase subunit A (495 aa).

Residues lysine 78 and serine 158 each act as charge relay system in the active site. Residue serine 182 is the Acyl-ester intermediate of the active site.

The protein belongs to the amidase family. GatA subfamily. In terms of assembly, heterotrimer of A, B and C subunits.

It catalyses the reaction L-glutamyl-tRNA(Gln) + L-glutamine + ATP + H2O = L-glutaminyl-tRNA(Gln) + L-glutamate + ADP + phosphate + H(+). Its function is as follows. Allows the formation of correctly charged Gln-tRNA(Gln) through the transamidation of misacylated Glu-tRNA(Gln) in organisms which lack glutaminyl-tRNA synthetase. The reaction takes place in the presence of glutamine and ATP through an activated gamma-phospho-Glu-tRNA(Gln). The polypeptide is Glutamyl-tRNA(Gln) amidotransferase subunit A (Dinoroseobacter shibae (strain DSM 16493 / NCIMB 14021 / DFL 12)).